The sequence spans 86 residues: MAKKSLNETSPVARFEQSLEELEQLVQKMEVGDLSLEQSLTAYERGIGLYRDCQQALEQAELRVRLLTDPARPELAQAFEPPSLDG.

It belongs to the XseB family. In terms of assembly, heterooligomer composed of large and small subunits.

The protein resides in the cytoplasm. It catalyses the reaction Exonucleolytic cleavage in either 5'- to 3'- or 3'- to 5'-direction to yield nucleoside 5'-phosphates.. Functionally, bidirectionally degrades single-stranded DNA into large acid-insoluble oligonucleotides, which are then degraded further into small acid-soluble oligonucleotides. This is Exodeoxyribonuclease 7 small subunit from Xanthomonas oryzae pv. oryzae (strain MAFF 311018).